The chain runs to 258 residues: Leucine-rich repeat-containing protein 3B (258 aa).

Positions 1–33 (MTPLDLWLSRSIPMCLLLQSLVLMVLCFPSAST) are cleaved as a signal peptide. The region spanning 34–68 (CPKGCTCQRSESPPHGLNVTCSLSRLKEIPPDVPP) is the LRRNT domain. N-linked (GlcNAc...) asparagine glycosylation is present at Asn-51. LRR repeat units follow at residues 69 to 90 (DTQL…IFHG), 93 to 114 (MLRR…AFIG), and 118 to 139 (SLEV…AFAR). Residue Asn-98 is glycosylated (N-linked (GlcNAc...) asparagine). Positions 149–196 (NPWHCDCALQQALGGMAHNHERVLCRSSELRDQEGQPFMAVDADLCNL) constitute an LRRCT domain. Residues 204–224 (AMLVTMFGWFAMVISYVVYYV) form a helical membrane-spanning segment.

The protein belongs to the LRRC3 family.

The protein localises to the membrane. This chain is Leucine-rich repeat-containing protein 3B (lrrc3b), found in Danio rerio (Zebrafish).